Here is a 418-residue protein sequence, read N- to C-terminus: tRNA-2-methylthio-N(6)-dimethylallyladenosine synthase (418 aa).

The MTTase N-terminal domain occupies 2–118 (PGYYLWTIGC…WREIPEGFIL (117 aa)). Residues cysteine 11, cysteine 47, cysteine 81, cysteine 134, cysteine 138, and cysteine 141 each contribute to the [4Fe-4S] cluster site. The 232-residue stretch at 120 to 351 (LRPPVSANVT…EDLQKETVGK (232 aa)) folds into the Radical SAM core domain. Positions 346-414 (KETVGKANAA…PWSLQAKLVN (69 aa)) constitute a TRAM domain.

This sequence belongs to the methylthiotransferase family. MiaB subfamily. In terms of assembly, monomer. [4Fe-4S] cluster is required as a cofactor.

The protein resides in the cytoplasm. The catalysed reaction is N(6)-dimethylallyladenosine(37) in tRNA + (sulfur carrier)-SH + AH2 + 2 S-adenosyl-L-methionine = 2-methylsulfanyl-N(6)-dimethylallyladenosine(37) in tRNA + (sulfur carrier)-H + 5'-deoxyadenosine + L-methionine + A + S-adenosyl-L-homocysteine + 2 H(+). In terms of biological role, catalyzes the methylthiolation of N6-(dimethylallyl)adenosine (i(6)A), leading to the formation of 2-methylthio-N6-(dimethylallyl)adenosine (ms(2)i(6)A) at position 37 in tRNAs that read codons beginning with uridine. The sequence is that of tRNA-2-methylthio-N(6)-dimethylallyladenosine synthase from Dehalococcoides mccartyi (strain CBDB1).